Here is a 278-residue protein sequence, read N- to C-terminus: Phosphatidylglycerol--prolipoprotein diacylglyceryl transferase (278 aa).

3 helical membrane-spanning segments follow: residues 21-41 (WYGI…QASV), 54-74 (IIFW…VIFQ), and 88-108 (IWHG…TGII). Residue R136 participates in a 1,2-diacyl-sn-glycero-3-phospho-(1'-sn-glycerol) binding. 2 helical membrane passes run 176–196 (QPTF…LILL) and 234–254 (IRVA…IMII).

It belongs to the Lgt family.

It is found in the cell membrane. The enzyme catalyses L-cysteinyl-[prolipoprotein] + a 1,2-diacyl-sn-glycero-3-phospho-(1'-sn-glycerol) = an S-1,2-diacyl-sn-glyceryl-L-cysteinyl-[prolipoprotein] + sn-glycerol 1-phosphate + H(+). The protein operates within protein modification; lipoprotein biosynthesis (diacylglyceryl transfer). Its function is as follows. Catalyzes the transfer of the diacylglyceryl group from phosphatidylglycerol to the sulfhydryl group of the N-terminal cysteine of a prolipoprotein, the first step in the formation of mature lipoproteins. In Staphylococcus xylosus, this protein is Phosphatidylglycerol--prolipoprotein diacylglyceryl transferase.